The following is a 436-amino-acid chain: 3-ketoacyl-CoA thiolase (436 aa).

Catalysis depends on cysteine 99, which acts as the Acyl-thioester intermediate. Active-site proton acceptor residues include histidine 392 and cysteine 422.

It belongs to the thiolase-like superfamily. Thiolase family. Heterotetramer of two alpha chains (FadJ) and two beta chains (FadI).

It localises to the cytoplasm. The catalysed reaction is an acyl-CoA + acetyl-CoA = a 3-oxoacyl-CoA + CoA. The protein operates within lipid metabolism; fatty acid beta-oxidation. Its function is as follows. Catalyzes the final step of fatty acid oxidation in which acetyl-CoA is released and the CoA ester of a fatty acid two carbons shorter is formed. The protein is 3-ketoacyl-CoA thiolase of Escherichia coli O81 (strain ED1a).